A 295-amino-acid chain; its full sequence is Guided entry of tail-anchored proteins factor CAMLG (295 aa).

Disordered stretches follow at residues 1–73 (MEPM…ILNP) and 127–148 (GVELRQRNRGDLTADSAPRGSH). Over 1–188 (MEPMPSATDG…RTTEEFDSFR (188 aa)) the chain is Cytoplasmic. Polar residues predominate over residues 15 to 24 (ATPSGLSASQ). Position 53 is a phosphoserine (Ser53). Residues 127–138 (GVELRQRNRGDL) show a composition bias toward basic and acidic residues. A helical membrane pass occupies residues 189 to 206 (IFRLVGCALLALVVRAFV). The Lumenal segment spans residues 207–208 (CK). Cys207 and Cys283 are joined by a disulfide. A helical membrane pass occupies residues 209 to 227 (YLSIFAPFLTLQLAYMGLY). Residues 228-268 (KYFPKGEKKVKTTVLTAALLLSGIPAEVINRSMDTYSKMGE) are Cytoplasmic-facing. The helical transmembrane segment at 269 to 287 (VFTDLCVYFFTFIFCHEVL) threads the bilayer. Residues 288-295 (EYWGPEVP) lie on the Lumenal side of the membrane.

As to quaternary structure, component of the Golgi to ER traffic (GET) complex, which is composed of GET1/WRB, CAMLG/GET2 and GET3/TRC40. Within the complex, GET1 and CAMLG form a heterotetramer which is stabilized by phosphatidylinositol binding and which binds to the GET3 homodimer. Interacts (via C-terminus) with GET1. Interacts (via N-terminus) with GET3. GET3 shows a higher affinity for CAMLG than for GET1. Interacts (via N-terminus) with TNFRSF13B/TACI (via C-terminus). In terms of tissue distribution, in the central nervous system, expressed in astrocytes, microglia and neurons (at protein level).

It localises to the endoplasmic reticulum membrane. Its function is as follows. Required for the post-translational delivery of tail-anchored (TA) proteins to the endoplasmic reticulum. Together with GET1/WRB, acts as a membrane receptor for soluble GET3/TRC40, which recognizes and selectively binds the transmembrane domain of TA proteins in the cytosol. Required for the stability of GET1. Stimulates calcium signaling in T cells through its involvement in elevation of intracellular calcium. Essential for the survival of peripheral follicular B cells. This chain is Guided entry of tail-anchored proteins factor CAMLG, found in Rattus norvegicus (Rat).